We begin with the raw amino-acid sequence, 441 residues long: S-adenosylmethionine synthase 1 (441 aa).

E9 is a Mg(2+) binding site. H15 serves as a coordination point for ATP. E43 contacts K(+). The L-methionine site is built by E56 and Q99. ATP is bound by residues 167–169, 235–238, D246, 252–253, A269, K273, and K277; these read DGK, SGRF, and RK. Residue D246 participates in L-methionine binding. L-methionine is bound at residue K277.

Belongs to the AdoMet synthase family. As to quaternary structure, homotetramer. Requires Mn(2+) as cofactor. Mg(2+) serves as cofactor. Co(2+) is required as a cofactor. It depends on K(+) as a cofactor.

The protein resides in the cytoplasm. The enzyme catalyses L-methionine + ATP + H2O = S-adenosyl-L-methionine + phosphate + diphosphate. It functions in the pathway amino-acid biosynthesis; S-adenosyl-L-methionine biosynthesis; S-adenosyl-L-methionine from L-methionine: step 1/1. Catalyzes the formation of S-adenosylmethionine from methionine and ATP. The reaction comprises two steps that are both catalyzed by the same enzyme: formation of S-adenosylmethionine (AdoMet) and triphosphate, and subsequent hydrolysis of the triphosphate. This chain is S-adenosylmethionine synthase 1 (SAMS1), found in Daucus carota (Wild carrot).